Consider the following 299-residue polypeptide: Protein NSG2 (299 aa).

Topologically, residues 1–108 (MANRGEPDPK…PSRTRQTRQN (108 aa)) are cytoplasmic. Residue serine 90 is modified to Phosphoserine. Residues 109-129 (ILHYLQAVLILSLSGFAYHEL) form a helical membrane-spanning segment. Residues 130–161 (SRNLHDNHLLHPDFASRPLLLGVKLCNWLSNG) are Lumenal-facing. The chain crosses the membrane as a helical span at residues 162 to 182 (VLPNWLGYGVEGLLFGSVVPI). Residues 183 to 237 (LDNIFQTEVVKSSVHHDSLTSVIRSINAMLGVTFGIRKIQWNSSLQAAGAWGLLN) lie on the Cytoplasmic side of the membrane. The chain crosses the membrane as a helical span at residues 238 to 258 (IILWLFFDGSISMLMSCICIG). At 259–268 (VGCCISCYKD) the chain is on the lumenal side. The helical transmembrane segment at 269 to 289 (IIDGSQFLYFMDFYFLGSLMF) threads the bilayer. Residues 290-299 (GKLGRYLYSH) are Cytoplasmic-facing.

This sequence belongs to the INSIG family.

It localises to the endoplasmic reticulum membrane. Stabilizes the HMG-CoA reductase HMG2 by preventing its HRD1-dependent degradation. Binds directly to the sterol-sensing domain (SSD)-containing transmembrane region of HMG2, promoting its folding to protect it from degradation. In Saccharomyces cerevisiae (strain ATCC 204508 / S288c) (Baker's yeast), this protein is Protein NSG2 (NSG2).